Consider the following 308-residue polypeptide: D-alanine--D-alanine ligase (308 aa).

An ATP-grasp domain is found at 104–301 (KQIWQGSDLP…FDELCVAILD (198 aa)). 130-185 (IAELGLPVIIKPVHEGSSVGMSKVEKAEDFAAAIEKATQHDAVVMAEKWITGREFT) lines the ATP pocket. Mg(2+) is bound by residues Asp-255, Glu-268, and Asn-270.

Belongs to the D-alanine--D-alanine ligase family. Mg(2+) is required as a cofactor. Requires Mn(2+) as cofactor.

The protein localises to the cytoplasm. The enzyme catalyses 2 D-alanine + ATP = D-alanyl-D-alanine + ADP + phosphate + H(+). The protein operates within cell wall biogenesis; peptidoglycan biosynthesis. Functionally, cell wall formation. The polypeptide is D-alanine--D-alanine ligase (Acinetobacter baumannii (strain AB307-0294)).